A 108-amino-acid chain; its full sequence is Large ribosomal subunit protein uL24 (108 aa).

This sequence belongs to the universal ribosomal protein uL24 family. As to quaternary structure, part of the 50S ribosomal subunit.

Functionally, one of two assembly initiator proteins, it binds directly to the 5'-end of the 23S rRNA, where it nucleates assembly of the 50S subunit. In terms of biological role, one of the proteins that surrounds the polypeptide exit tunnel on the outside of the subunit. This chain is Large ribosomal subunit protein uL24, found in Trichlorobacter lovleyi (strain ATCC BAA-1151 / DSM 17278 / SZ) (Geobacter lovleyi).